Here is a 727-residue protein sequence, read N- to C-terminus: Translation initiation factor IF-2, mitochondrial (727 aa).

A mitochondrion-targeting transit peptide spans 1–29 (MNQKLLKLENLLRFHTIYRQLHSLCQRRA). The region spanning 178-348 (PRSPVVTIMG…VALAEMLELK (171 aa)) is the tr-type G domain. Residues 187–194 (GHVDHGKT) are G1. A GTP-binding site is contributed by 187–194 (GHVDHGKT). Residues 212-216 (GITQH) form a G2 region. Residues 234–237 (DTPG) and 288–291 (NKCD) each bind GTP. The interval 234–237 (DTPG) is G3. Residues 288–291 (NKCD) are G4. The G5 stretch occupies residues 324–326 (SAL). Phosphothreonine is present on threonine 688.

Belongs to the TRAFAC class translation factor GTPase superfamily. Classic translation factor GTPase family. IF-2 subfamily. As to quaternary structure, monomer. Expressed in all tissues examined. Highest level in skeletal muscle.

It localises to the mitochondrion. Functionally, one of the essential components for the initiation of protein synthesis. Protects formylmethionyl-tRNA from spontaneous hydrolysis and promotes its binding to the 30S ribosomal subunits. Also involved in the hydrolysis of GTP during the formation of the 70S ribosomal complex. This chain is Translation initiation factor IF-2, mitochondrial (MTIF2), found in Homo sapiens (Human).